Reading from the N-terminus, the 462-residue chain is 3-isopropylmalate dehydratase large subunit (462 aa).

[4Fe-4S] cluster-binding residues include Cys-337, Cys-397, and Cys-400.

It belongs to the aconitase/IPM isomerase family. LeuC type 1 subfamily. As to quaternary structure, heterodimer of LeuC and LeuD. [4Fe-4S] cluster serves as cofactor.

It carries out the reaction (2R,3S)-3-isopropylmalate = (2S)-2-isopropylmalate. The protein operates within amino-acid biosynthesis; L-leucine biosynthesis; L-leucine from 3-methyl-2-oxobutanoate: step 2/4. Its function is as follows. Catalyzes the isomerization between 2-isopropylmalate and 3-isopropylmalate, via the formation of 2-isopropylmaleate. The chain is 3-isopropylmalate dehydratase large subunit from Listeria monocytogenes serotype 4a (strain HCC23).